Consider the following 185-residue polypeptide: uncharacterized protein (185 aa).

Topologically, residues 1 to 69 (MSSFIDSIKS…SSDCSRAERT (69 aa)) are cytoplasmic. A helical transmembrane segment spans residues 70–90 (FNLILFAIVDLVICCESMAFF). Residue asparagine 91 is a topological domain, extracellular. Residues 92–112 (LLLKLPSMLLVSFLTMLVFSI) form a helical membrane-spanning segment. Over 113–118 (SYSWSA) the chain is Cytoplasmic. A helical membrane pass occupies residues 119–139 (FNWISFAFSSASFLMKACILF). Residues 140–185 (NSSFTWFGVKAVIAEDMLYRMVRGLFCASFVKQLQTTFLATAIVLC) are Extracellular-facing.

The protein localises to the membrane. This is an uncharacterized protein from Saccharomyces cerevisiae (strain ATCC 204508 / S288c) (Baker's yeast).